The primary structure comprises 1047 residues: Helicase-like transcription factor CHR27 (1047 aa).

The span at 1–11 shows a compositional bias: low complexity; the sequence is MDSAIEISSGS. 3 disordered regions span residues 1 to 89, 103 to 130, and 145 to 174; these read MDSA…SGSG, RTLP…SGSR, and KRTL…GSRF. 2 stretches are compositionally biased toward polar residues: residues 52-88 and 118-128; these read TNQA…SSGS and SGTNNISNASG. In terms of domain architecture, Helicase ATP-binding spans 296–597; sequence ETSSFNCPGG…YSYFRFLRYD (302 aa). ATP is bound at residue 309-316; it reads DDQGLGKT. Disordered regions lie at residues 349-407 and 511-533; these read ADDE…TRAF and VGAS…SEPD. The span at 354–368 shows a compositional bias: basic and acidic residues; sequence DNAKHESGSHVKPEL. Positions 370–379 are enriched in polar residues; it reads VSSNSETSVL. A compositionally biased stretch (acidic residues) spans 385 to 400; that stretch reads DENDSSDMEKAEDEEA. Residues 511–523 are compositionally biased toward basic residues; that stretch reads VGASKKSKRRGRK. Residues 751-790 form an RING-type; degenerate zinc finger; the sequence is CYECNEPPEKPVVTLCGHIFCYECVLEYITGDENTCPVPR. Over residues 851–868 the composition is skewed to polar residues; that stretch reads QPDSPNSAQHGQMPSSSR. A disordered region spans residues 851 to 873; that stretch reads QPDSPNSAQHGQMPSSSRPYDDD. The Helicase C-terminal domain occupies 887–1042; the sequence is SPSQGAVKTI…ATRLTVDDLK (156 aa).

This sequence belongs to the SNF2/RAD54 helicase family. RAD16 subfamily. As to quaternary structure, interacts with SUVR2. Interacts with itself.

The protein resides in the nucleus. Functionally, probable helicase-like transcription factor involved in transcriptional gene silencing. Associates with SUVR2 and contributes to transcriptional gene silencing at RNA-directed DNA methylation (RdDM) target loci but also at RdDM-independent target loci. May be involved in nucleosome positioning to form ordered nucleosome arrays on chromatin. Associates with SUVR2 and functions redundantly with FRG2. Required for the efficient methylation of a broad range of RdDM target loci. This chain is Helicase-like transcription factor CHR27, found in Arabidopsis thaliana (Mouse-ear cress).